Reading from the N-terminus, the 330-residue chain is Methionyl-tRNA formyltransferase (330 aa).

121 to 124 (SLLP) serves as a coordination point for (6S)-5,6,7,8-tetrahydrofolate.

It belongs to the Fmt family.

The catalysed reaction is L-methionyl-tRNA(fMet) + (6R)-10-formyltetrahydrofolate = N-formyl-L-methionyl-tRNA(fMet) + (6S)-5,6,7,8-tetrahydrofolate + H(+). Functionally, attaches a formyl group to the free amino group of methionyl-tRNA(fMet). The formyl group appears to play a dual role in the initiator identity of N-formylmethionyl-tRNA by promoting its recognition by IF2 and preventing the misappropriation of this tRNA by the elongation apparatus. In Burkholderia orbicola (strain MC0-3), this protein is Methionyl-tRNA formyltransferase.